The following is a 122-amino-acid chain: Large ribosomal subunit protein uL14 (122 aa).

Belongs to the universal ribosomal protein uL14 family. In terms of assembly, part of the 50S ribosomal subunit. Forms a cluster with proteins L3 and L19. In the 70S ribosome, L14 and L19 interact and together make contacts with the 16S rRNA in bridges B5 and B8.

Functionally, binds to 23S rRNA. Forms part of two intersubunit bridges in the 70S ribosome. This is Large ribosomal subunit protein uL14 from Rubrobacter xylanophilus (strain DSM 9941 / JCM 11954 / NBRC 16129 / PRD-1).